The following is a 250-amino-acid chain: 2,3-bisphosphoglycerate-dependent phosphoglycerate mutase (250 aa).

Residues 10 to 17 (RHGESQWN), 23 to 24 (TG), Arg-62, 89 to 92 (ERHY), Lys-100, 116 to 117 (RR), and 185 to 186 (GN) contribute to the substrate site. The Tele-phosphohistidine intermediate role is filled by His-11. Residue Glu-89 is the Proton donor/acceptor of the active site.

It belongs to the phosphoglycerate mutase family. BPG-dependent PGAM subfamily. Homodimer.

It catalyses the reaction (2R)-2-phosphoglycerate = (2R)-3-phosphoglycerate. Its pathway is carbohydrate degradation; glycolysis; pyruvate from D-glyceraldehyde 3-phosphate: step 3/5. Its function is as follows. Catalyzes the interconversion of 2-phosphoglycerate and 3-phosphoglycerate. In Serratia proteamaculans (strain 568), this protein is 2,3-bisphosphoglycerate-dependent phosphoglycerate mutase.